Reading from the N-terminus, the 367-residue chain is Aspartate-semialdehyde dehydrogenase (367 aa).

NADP(+)-binding positions include 10–13 (RGMV), 37–38 (TS), and Gln73. Arg102 contributes to the phosphate binding site. Cys135 acts as the Acyl-thioester intermediate in catalysis. The residue at position 135 (Cys135) is an S-cysteinyl cysteine; in inhibited form. Gln162 is a substrate binding site. NADP(+)-binding positions include 165–169 (SGGGA), Arg173, and Pro193. Glu241 is a substrate binding site. Lys244 contacts phosphate. Arg267 lines the substrate pocket. His274 functions as the Proton acceptor in the catalytic mechanism. Position 350 (Gln350) interacts with NADP(+).

It belongs to the aspartate-semialdehyde dehydrogenase family. Homodimer.

The enzyme catalyses L-aspartate 4-semialdehyde + phosphate + NADP(+) = 4-phospho-L-aspartate + NADPH + H(+). The protein operates within amino-acid biosynthesis; L-lysine biosynthesis via DAP pathway; (S)-tetrahydrodipicolinate from L-aspartate: step 2/4. It participates in amino-acid biosynthesis; L-methionine biosynthesis via de novo pathway; L-homoserine from L-aspartate: step 2/3. Its pathway is amino-acid biosynthesis; L-threonine biosynthesis; L-threonine from L-aspartate: step 2/5. With respect to regulation, is inhibited by L- and D-cystine, and by other cystine derivatives, via the formation of a covalently bound cysteine at the active site Cys-135. Its function is as follows. Catalyzes the NADPH-dependent formation of L-aspartate-semialdehyde (L-ASA) by the reductive dephosphorylation of L-aspartyl-4-phosphate. The sequence is that of Aspartate-semialdehyde dehydrogenase from Escherichia coli (strain K12).